The following is a 387-amino-acid chain: S-adenosylmethionine synthase (387 aa).

An ATP-binding site is contributed by His15. Residue Asp17 participates in Mg(2+) binding. Glu43 is a binding site for K(+). The L-methionine site is built by Glu56 and Gln99. The tract at residues 99 to 109 (QSPDIAQGVNR) is flexible loop. ATP contacts are provided by residues 166–168 (DAK), 232–233 (RF), Asp241, 247–248 (RK), Ala264, and Lys268. Asp241 is a binding site for L-methionine. Lys272 provides a ligand contact to L-methionine.

It belongs to the AdoMet synthase family. As to quaternary structure, homotetramer; dimer of dimers. Requires Mg(2+) as cofactor. K(+) is required as a cofactor.

Its subcellular location is the cytoplasm. It carries out the reaction L-methionine + ATP + H2O = S-adenosyl-L-methionine + phosphate + diphosphate. It functions in the pathway amino-acid biosynthesis; S-adenosyl-L-methionine biosynthesis; S-adenosyl-L-methionine from L-methionine: step 1/1. Its function is as follows. Catalyzes the formation of S-adenosylmethionine (AdoMet) from methionine and ATP. The overall synthetic reaction is composed of two sequential steps, AdoMet formation and the subsequent tripolyphosphate hydrolysis which occurs prior to release of AdoMet from the enzyme. The protein is S-adenosylmethionine synthase of Nitrosomonas europaea (strain ATCC 19718 / CIP 103999 / KCTC 2705 / NBRC 14298).